The sequence spans 692 residues: Highly divergent homeobox (692 aa).

The segment at residues 3-63 (LRSVFTVEQQ…NKRRKMSSKS (61 aa)) is a DNA-binding region (homeobox 1). Polar residues predominate over residues 117-133 (SSSSKQGTTKHTNTQIT). A disordered region spans residues 117-136 (SSSSKQGTTKHTNTQITEAH). Glycyl lysine isopeptide (Lys-Gly) (interchain with G-Cter in SUMO2) cross-links involve residues lysine 137, lysine 142, lysine 146, lysine 165, lysine 174, lysine 196, lysine 214, lysine 223, and lysine 234. The homeobox 2 DNA-binding region spans 437-500 (ALQDRTQFSD…NRRRKYRLMG (64 aa)). 2 disordered regions span residues 505 to 541 (PPRGGPADFSEQPESGSLSALTPGEEAGPEVGEDNDR) and 647 to 692 (KDQQ…SDSL). Residues 676 to 692 (TSLSVSSLSEKNASDSL) are compositionally biased toward polar residues.

It is found in the nucleus. This Mus musculus (Mouse) protein is Highly divergent homeobox (Hdx).